The following is a 483-amino-acid chain: UDP-N-acetylmuramyl-tripeptide synthetase (483 aa).

Ser43 is a UDP-N-acetyl-alpha-D-muramoyl-L-alanyl-D-glutamate binding site. 116 to 122 (GTKGKTT) contributes to the ATP binding site. UDP-N-acetyl-alpha-D-muramoyl-L-alanyl-D-glutamate is bound by residues 160–161 (TT), Ser187, and Arg195. An N6-carboxylysine modification is found at Lys229.

This sequence belongs to the MurCDEF family. MurE subfamily. Post-translationally, carboxylation is probably crucial for Mg(2+) binding and, consequently, for the gamma-phosphate positioning of ATP.

It is found in the cytoplasm. The protein operates within cell wall biogenesis; peptidoglycan biosynthesis. Functionally, catalyzes the addition of an amino acid to the nucleotide precursor UDP-N-acetylmuramoyl-L-alanyl-D-glutamate (UMAG) in the biosynthesis of bacterial cell-wall peptidoglycan. This chain is UDP-N-acetylmuramyl-tripeptide synthetase, found in Lactococcus lactis subsp. cremoris (strain MG1363).